We begin with the raw amino-acid sequence, 81 residues long: Acyl carrier protein 2 (81 aa).

The 79-residue stretch at 1-79 (MTETEILERI…DVIGAVQSLL (79 aa)) folds into the Carrier domain. Ser39 carries the O-(pantetheine 4'-phosphoryl)serine modification.

The protein belongs to the acyl carrier protein (ACP) family. Post-translationally, 4'-phosphopantetheine is transferred from CoA to a specific serine of apo-ACP by AcpS. This modification is essential for activity because fatty acids are bound in thioester linkage to the sulfhydryl of the prosthetic group.

The protein localises to the cytoplasm. The protein operates within lipid metabolism; fatty acid biosynthesis. Functionally, carrier of the growing fatty acid chain in fatty acid biosynthesis. The protein is Acyl carrier protein 2 of Ralstonia nicotianae (strain ATCC BAA-1114 / GMI1000) (Ralstonia solanacearum).